We begin with the raw amino-acid sequence, 250 residues long: 2,3-bisphosphoglycerate-dependent phosphoglycerate mutase (250 aa).

Residues 10–17 (RHGESQWN), 23–24 (TG), Arg62, 89–92 (ERHY), Lys100, 116–117 (RR), and 185–186 (GN) contribute to the substrate site. His11 functions as the Tele-phosphohistidine intermediate in the catalytic mechanism. Glu89 acts as the Proton donor/acceptor in catalysis.

The protein belongs to the phosphoglycerate mutase family. BPG-dependent PGAM subfamily. As to quaternary structure, homodimer.

It catalyses the reaction (2R)-2-phosphoglycerate = (2R)-3-phosphoglycerate. It participates in carbohydrate degradation; glycolysis; pyruvate from D-glyceraldehyde 3-phosphate: step 3/5. In terms of biological role, catalyzes the interconversion of 2-phosphoglycerate and 3-phosphoglycerate. The chain is 2,3-bisphosphoglycerate-dependent phosphoglycerate mutase from Escherichia coli O139:H28 (strain E24377A / ETEC).